A 141-amino-acid chain; its full sequence is MSNKKIIKIIKLQIPGGKANPAPPIGPALGAAGVNIMGFCKEFNAATQDRPGDLLPVVITVYSDKTFSFVMKQSPVSSLIKKALGLESGSKIPNRNKVGKLTRAQITAIAEQKMKDMDVVLLESAERMVEGTARSMGVDVE.

It belongs to the universal ribosomal protein uL11 family. Part of the ribosomal stalk of the 50S ribosomal subunit. Interacts with L10 and the large rRNA to form the base of the stalk. L10 forms an elongated spine to which L12 dimers bind in a sequential fashion forming a multimeric L10(L12)X complex. One or more lysine residues are methylated.

Functionally, forms part of the ribosomal stalk which helps the ribosome interact with GTP-bound translation factors. The protein is Large ribosomal subunit protein uL11 of Chlamydia trachomatis serovar L2 (strain ATCC VR-902B / DSM 19102 / 434/Bu).